The following is a 1032-amino-acid chain: Protein phosphatase 1 regulatory subunit 12A (1032 aa).

The short motif at 35 to 38 is the KVKF motif element; it reads KVKF. ANK repeat units lie at residues 39-68, 72-101, 105-134, 138-164, 198-227, and 231-260; these read DDGAVFLAACSSGDTDEVLKLLHRGADINY, DGLTALHQACIDDNVDMVKFLVENGANINQ, EGWIPLHAAASCGYLDIAEFLIGQGAHVGA, EGDTPLDIAEEEAMEELLQNEVNRQGV, SGGTALHVAAAKGYTEVLKLLIQAGYDVNI, and DGWTPLHAAAHWGKEEACRILVDNLCDMET. A (3S)-3-hydroxyasparagine; by HIF1AN mark is found at N67 and N100. N226 is subject to (3S)-3-hydroxyasparagine; by HIF1AN. Disordered stretches follow at residues 290–553 and 588–928; these read LHSE…HRSC and SSTS…RLEK. The segment covering 291 to 300 has biased composition (basic and acidic residues); the sequence is HSEKRDKKSP. A Phosphoserine modification is found at S299. Residues 302–316 are compositionally biased toward polar residues; the sequence is IESTANMENNQPQKT. The segment covering 318-340 has biased composition (basic and acidic residues); sequence KNKETLIIEPEKNASRIESLEQE. Residues 357-369 show a composition bias toward acidic residues; it reads SEEDEEDDSESEA. Residues 383 to 399 are compositionally biased toward low complexity; that stretch reads AHTASTQAAPAAVTTPT. Residues 400–421 are compositionally biased toward polar residues; that stretch reads LSSNQGTPTSPVKKFPTSTTKI. S422 and S432 each carry phosphoserine. Basic and acidic residues predominate over residues 422-432; that stretch reads SPKEEERKDES. T443 is modified (phosphothreonine). S445 carries the post-translational modification Phosphoserine. Y446 is modified (phosphotyrosine). Over residues 469-480 the composition is skewed to low complexity; that stretch reads RSASSPRLSSSL. At S472 the chain carries Phosphoserine; by NUAK1. S473 is subject to Phosphoserine; by CDK1. At S477 the chain carries Phosphoserine. The segment covering 481 to 491 has biased composition (basic and acidic residues); the sequence is DNKEKEKDNKG. A phosphoserine mark is found at S507 and S509. A compositionally biased stretch (polar residues) spans 540-551; that stretch reads NSSINEGSTYHR. S601 bears the Phosphoserine mark. Over residues 602–612 the composition is skewed to polar residues; that stretch reads PAGTQSSTSNR. Over residues 614–625 the composition is skewed to basic and acidic residues; that stretch reads WAEDSTEKEKDS. S618 carries the phosphoserine modification. Low complexity predominate over residues 633 to 661; sequence LVAPTVVSAAASSTTALTTTTAGTLSSTS. Residues 674 to 683 show a composition bias toward basic and acidic residues; the sequence is VRDEESESQR. An interaction with ROCK2 region spans residues 683-866; sequence RKARSRQARQ…VSFWTQDSDE (184 aa). The span at 684-694 shows a compositional bias: basic residues; sequence KARSRQARQSR. A phosphoserine; by PKA and PKG; in vitro mark is found at S693 and S696. T697 is modified (phosphothreonine; by ROCK1, ROCK2, CDC42BP, ZIPK/DAPK3 and RAF1). The segment covering 719 to 768 has biased composition (basic and acidic residues); the sequence is RTREQENEEKDKEEKEKQDKEKQEEKKESEVSREDEYKQKYSRTYDETYA. A compositionally biased stretch (low complexity) spans 774 to 797; that stretch reads STSSSSTPSSSSLSTLGSSLYASS. The span at 798 to 812 shows a compositional bias: polar residues; sequence QLNRPNSLVGITSAY. The residue at position 804 (S804) is a Phosphoserine. The segment covering 816-842 has biased composition (basic and acidic residues); sequence LTKDNEREGEKKEEEKEGEDKSQPKSI. A compositionally biased stretch (basic residues) spans 843 to 854; sequence RERRRPREKRRS. S854 carries the phosphoserine; by ROCK2 modification. S864 and S873 each carry phosphoserine. A compositionally biased stretch (basic and acidic residues) spans 869–885; it reads QERQSDTEDGSSKRDTQ. The segment covering 886–900 has biased composition (low complexity); sequence TDSVSRYDSSSTSSS. S905 and S910 each carry phosphoserine. Phosphoserine; by NUAK1 is present on S912. Basic and acidic residues predominate over residues 916–928; it reads LEERKPYGSRLEK. A Phosphoserine modification is found at S997.

As to quaternary structure, PP1 comprises a catalytic subunit, PPP1CA, PPP1CB or PPP1CC, and one or several targeting or regulatory subunits. PPP1R12A mediates binding to myosin. Interacts with ARHA and CIT. Binds PPP1R12B, ROCK1 and IL16. Interacts directly with PRKG1. Non-covalent dimer of 2 dimers; PRKG1-PRKG1 and PPP1R12A-PPP1R12A. Interacts with SMTNL1. Interacts with PPP1CB; the interaction is direct. Interacts (when phosphorylated at Ser-445, Ser-472 and Ser-910) with 14-3-3. Interacts with ROCK1 and ROCK2. Interacts with isoform 1 and isoform 2 of ZIPK/DAPK3. Interacts with RAF1. Interacts with HIF1AN. Interacts with NCKAP1L. Post-translationally, phosphorylated on upon DNA damage, probably by ATM or ATR. Phosphorylated by CIT (Rho-associated kinase). Phosphorylated cooperatively by ROCK1 and CDC42BP on Thr-697. In vitro, phosphorylation of Ser-696 by PKA and PKG appears to prevent phosphorylation of the inhibitory site Thr-697, probably mediated by PRKG1. May be phosphorylated at Thr-697 by DMPK; may inhibit the myosin phosphatase activity. Phosphorylated at Ser-473 by CDK1 during mitosis, creating docking sites for the POLO box domains of PLK1. Subsequently, PLK1 binds and phosphorylates PPP1R12A. Smooth muscle. Detected in aorta, portal vein, stomach, intestine, bladder and lung.

It localises to the cytoplasm. Its subcellular location is the cytoskeleton. The protein resides in the stress fiber. In terms of biological role, key regulator of protein phosphatase 1C (PPP1C). Mediates binding to myosin. As part of the PPP1C complex, involved in dephosphorylation of PLK1. Capable of inhibiting HIF1AN-dependent suppression of HIF1A activity. The sequence is that of Protein phosphatase 1 regulatory subunit 12A from Rattus norvegicus (Rat).